Consider the following 1531-residue polypeptide: Lysophospholipase nte1 (1531 aa).

At M1–G72 the chain is on the cytoplasmic side. Residues W73–V93 form a helical membrane-spanning segment. Topologically, residues T94–T115 are lumenal. Residues M116–I136 form a helical membrane-spanning segment. Residues R137 to I1531 are Cytoplasmic-facing. Disordered stretches follow at residues G242–R265, A303–K385, and N766–R789. The segment covering R325–S343 has biased composition (basic and acidic residues). A nucleoside 3',5'-cyclic phosphate is bound by residues G689–S809 and R849–R969. Residues S768–A779 show a composition bias toward low complexity. The region spanning L1228–K1392 is the PNPLA domain. Positions G1232–G1237 match the GXGXXG motif. A GXSXG motif is present at residues G1259–G1263. Residue S1261 is the Nucleophile of the active site. D1379 serves as the catalytic Proton acceptor. Residues D1379–G1381 carry the DGA/G motif. The tract at residues L1510 to I1531 is disordered.

It belongs to the NTE family.

The protein resides in the endoplasmic reticulum membrane. The catalysed reaction is a 1-acyl-sn-glycero-3-phosphocholine + H2O = sn-glycerol 3-phosphocholine + a fatty acid + H(+). Its activity is regulated as follows. Inhibited by organophosphorus esters. In terms of biological role, intracellular phospholipase B that catalyzes the double deacylation of phosphatidylcholine (PC) to glycerophosphocholine (GroPCho). Plays an important role in membrane lipid homeostasis. Responsible for the rapid PC turnover in response to inositol, elevated temperatures, or when choline is present in the growth medium. This Aspergillus niger (strain ATCC MYA-4892 / CBS 513.88 / FGSC A1513) protein is Lysophospholipase nte1 (nte1).